We begin with the raw amino-acid sequence, 215 residues long: SAGA complex/transcription factor TFIID complex subunit Taf10 (215 aa).

The segment at Met-1–Val-77 is disordered. The segment covering Gly-23–Thr-42 has biased composition (polar residues). Basic and acidic residues predominate over residues Asn-58–Gly-73. Residues Asn-58–Glu-203 enclose the Histone-fold domain.

The protein belongs to the TAF10 family. In terms of assembly, component of the 1.8 MDa SAGA (Spt-Ada-Gcn5 acetyltransferase) complex, which is composed of 19 subunits tra1, spt7, taf5, ngg1/ada3, sgf73, spt20, spt8, taf12, taf6, hfi1/ada1, ubp8, gcn5, ada2, spt3, sgf29, taf10, taf9, sgf11 and sus1. The SAGA complex is composed of 4 modules, namely the HAT (histone acetyltransferase) module (gcn5, ada2, ngg1/ada3 and sgf29), the DUB (deubiquitinating) module (ubp8, sgf11, sgf73 and sus1), the core or TAF (TBP-associated factor) module (taf5, taf6, taf9, taf10 and taf12), and the Tra1 or SPT (Suppressor of Ty) module (tra1, hfi1/ada1, spt3, spt7, spt8 and spt20). The Tra1/SPT module binds activators, the core module recruits TBP (TATA-binding protein), the HAT module contains the histone H3 acetyltransferase gcn5, and the DUB module comprises the histone H2B deubiquitinase ubp8. Component of the 1.2 MDa TFIID complex, which is composed of TATA-binding protein (TBP) and the 14 TBP-associated factors (TAFs). It comprises 1 copy of each taf1, taf2, taf3, taf7, taf8, taf11, taf13, 2 copies of each taf4, taf5, taf6, taf9, taf10, taf12, and 3 copies of taf14. In TFIID, taf10 heterodimerizes with taf3 and taf8.

Its subcellular location is the nucleus. In terms of biological role, functions as a component of both the DNA-binding general transcription initiation factor complex TFIID and the transcription coactivator SAGA complex. Binding of TFIID to a promoter (with or without TATA element) is the initial step in pre-initiation complex (PIC) formation. TFIID plays a key role in the regulation of gene expression by RNA polymerase II through different activities such as transcription activator interaction, core promoter recognition and selectivity, TFIIA and TFIIB interaction, chromatin modification (histone acetylation by TAF1), facilitation of DNA opening and initiation of transcription. SAGA acts as a general cofactor required for essentially all RNA polymerase II transcription. At the promoters, SAGA is required for transcription pre-initiation complex (PIC) recruitment. It influences RNA polymerase II transcriptional activity through different activities such as TBP interaction (via core/TAF module) and promoter selectivity, interaction with transcription activators (via Tra1/SPT module), and chromatin modification through histone acetylation (via HAT module) and deubiquitination (via DUB module). SAGA preferentially acetylates histones H3 (to form H3K9ac, H3K14ac, H3K18ac and H3K23ac) and H2B and deubiquitinates histone H2B. SAGA interacts with DNA via upstream activating sequences (UASs). The sequence is that of SAGA complex/transcription factor TFIID complex subunit Taf10 from Schizosaccharomyces pombe (strain 972 / ATCC 24843) (Fission yeast).